Reading from the N-terminus, the 180-residue chain is MSILADTEKKMAAALEFFTKEVRSFRTGKANPALVETVTVDVYGTTMRLSDLASISVADTRQLVISPYDANNVSAISKGIIAANLNLQPDVEGSIVRIKIPEPTAEYRNEVIKQLRRKSEEAKVAIRNIRRESNDKLKKDSDLTEDAVKGMEKKIQELTDKFCKQIDKMSKQKEVDLSSI.

The protein belongs to the RRF family.

It localises to the cytoplasm. Responsible for the release of ribosomes from messenger RNA at the termination of protein biosynthesis. May increase the efficiency of translation by recycling ribosomes from one round of translation to another. The chain is Ribosome-recycling factor from Chlamydia abortus (strain DSM 27085 / S26/3) (Chlamydophila abortus).